We begin with the raw amino-acid sequence, 299 residues long: MSPLDRTPPSLRGQDGEGSVQVHQDETAKIEGAKVFSVYGKGGIGKSTTSSNLSAAFSMLGKRVLQIGCDPKHDSTFTLTGSLVPTVIDILKEVDFHPEELRAEDFVFDGFNGVKCVEAGGPPAGTGCGGYVVGQTVKLLKQHHMLEDTDVVIFDVLGDVVCGGFAAPLQHADRALIVTANDFDSIYAMNRIIAAVQAKSKNYKVRLAGCVANRSRETDEVDRYCDTVGFNRIAHMPDLDAIRRSRLKKKTLFEMPDDEEIVQVRKEYIRLAETLWNGTEPLAPAPLPDRDIFELLGFD.

Residues 1 to 23 (MSPLDRTPPSLRGQDGEGSVQVH) are disordered. ATP contacts are provided by residues 43 to 48 (GIGKST) and K72. S47 contributes to the Mg(2+) binding site. 2 residues coordinate [4Fe-4S] cluster: C128 and C162. Residues 213–214 (NR) and 237–239 (PDL) each bind ATP.

It belongs to the NifH/BchL/ChlL family. As to quaternary structure, homodimer. Protochlorophyllide reductase is composed of three subunits; BchL, BchN and BchB. It depends on [4Fe-4S] cluster as a cofactor.

The enzyme catalyses chlorophyllide a + oxidized 2[4Fe-4S]-[ferredoxin] + 2 ADP + 2 phosphate = protochlorophyllide a + reduced 2[4Fe-4S]-[ferredoxin] + 2 ATP + 2 H2O. The protein operates within porphyrin-containing compound metabolism; bacteriochlorophyll biosynthesis (light-independent). Functionally, component of the dark-operative protochlorophyllide reductase (DPOR) that uses Mg-ATP and reduced ferredoxin to reduce ring D of protochlorophyllide (Pchlide) to form chlorophyllide a (Chlide). This reaction is light-independent. The L component serves as a unique electron donor to the NB-component of the complex, and binds Mg-ATP. This Roseobacter denitrificans (strain ATCC 33942 / OCh 114) (Erythrobacter sp. (strain OCh 114)) protein is Light-independent protochlorophyllide reductase iron-sulfur ATP-binding protein.